Reading from the N-terminus, the 138-residue chain is Basic phospholipase A2 trimucrotoxin (138 aa).

An N-terminal signal peptide occupies residues 1-16 (MRTLWIVAVLLLGVEG). 7 cysteine pairs are disulfide-bonded: C42-C131, C44-C60, C59-C111, C65-C138, C66-C104, C73-C97, and C91-C102. Residues Y43, G45, and G47 each coordinate Ca(2+). Residue H63 is part of the active site. Residue D64 participates in Ca(2+) binding. D105 is a catalytic residue.

This sequence belongs to the phospholipase A2 family. Group II subfamily. D49 sub-subfamily. As to quaternary structure, homodimer. The cofactor is Ca(2+). Expressed by the venom gland.

The protein resides in the secreted. It catalyses the reaction a 1,2-diacyl-sn-glycero-3-phosphocholine + H2O = a 1-acyl-sn-glycero-3-phosphocholine + a fatty acid + H(+). Snake venom phospholipase A2 (PLA2) that displays edema-inducing activities, as well as presynaptic neurotoxicity and low myotoxicity. PLA2 catalyzes the calcium-dependent hydrolysis of the 2-acyl groups in 3-sn-phosphoglycerides. This is Basic phospholipase A2 trimucrotoxin from Protobothrops mucrosquamatus (Taiwan habu).